Reading from the N-terminus, the 245-residue chain is 5'-nucleotidase SurE (245 aa).

Positions 8, 9, 39, and 91 each coordinate a divalent metal cation.

Belongs to the SurE nucleotidase family. Requires a divalent metal cation as cofactor.

The protein resides in the cytoplasm. It carries out the reaction a ribonucleoside 5'-phosphate + H2O = a ribonucleoside + phosphate. In terms of biological role, nucleotidase that shows phosphatase activity on nucleoside 5'-monophosphates. The protein is 5'-nucleotidase SurE of Herminiimonas arsenicoxydans.